A 184-amino-acid polypeptide reads, in one-letter code: Thymidine kinase (184 aa).

ATP is bound by residues 15–22 (GPMFSGKS) and 89–92 (DEIQ). E90 functions as the Proton acceptor in the catalytic mechanism. Residues C146, C149, C178, and C181 each contribute to the Zn(2+) site.

It belongs to the thymidine kinase family. Homotetramer.

The protein resides in the cytoplasm. It carries out the reaction thymidine + ATP = dTMP + ADP + H(+). In Mesomycoplasma hyopneumoniae (strain 232) (Mycoplasma hyopneumoniae), this protein is Thymidine kinase.